The primary structure comprises 440 residues: Transposon Ty1-JR1 Gag polyprotein (440 aa).

A compositionally biased stretch (low complexity) spans 1 to 16 (MESQQLSQHSHISHGS). Disordered regions lie at residues 1–93 (MESQ…MMTQ), 126–173 (PQSQ…RPPP), and 352–440 (GSRN…PGTY). 2 stretches are compositionally biased toward polar residues: residues 48–60 (TKAN…TPAS) and 127–152 (QSQF…GNTF). Residues 153-165 (TDSSSADSDMTST) show a composition bias toward low complexity. An RNA-binding region spans residues 299-401 (NNGIHINNKV…NSKSKTARAH (103 aa)). The span at 402-418 (NVSTSNNSPSTDNDSIS) shows a compositional bias: low complexity. S416 is subject to Phosphoserine. Positions 419–428 (KSTTEPIQLN) are enriched in polar residues. A compositionally biased stretch (basic and acidic residues) spans 429–440 (NKHDLHLRPGTY).

As to quaternary structure, homotrimer.

Its subcellular location is the cytoplasm. Capsid protein (CA) is the structural component of the virus-like particle (VLP), forming the shell that encapsulates the retrotransposons dimeric RNA genome. The particles are assembled from trimer-clustered units and there are holes in the capsid shells that allow for the diffusion of macromolecules. CA also has nucleocapsid-like chaperone activity, promoting primer tRNA(i)-Met annealing to the multipartite primer-binding site (PBS), dimerization of Ty1 RNA and initiation of reverse transcription. In Saccharomyces cerevisiae (strain ATCC 204508 / S288c) (Baker's yeast), this protein is Transposon Ty1-JR1 Gag polyprotein (TY1A-JR1).